The following is a 266-amino-acid chain: Methionine aminopeptidase 1 (266 aa).

His88 serves as a coordination point for substrate. Residues Asp106, Asp117, and His186 each contribute to the a divalent metal cation site. His193 is a substrate binding site. Residues Glu219 and Glu250 each contribute to the a divalent metal cation site.

This sequence belongs to the peptidase M24A family. Methionine aminopeptidase type 1 subfamily. In terms of assembly, monomer. Requires Co(2+) as cofactor. It depends on Zn(2+) as a cofactor. The cofactor is Mn(2+). Fe(2+) is required as a cofactor.

It carries out the reaction Release of N-terminal amino acids, preferentially methionine, from peptides and arylamides.. Its function is as follows. Removes the N-terminal methionine from nascent proteins. The N-terminal methionine is often cleaved when the second residue in the primary sequence is small and uncharged (Met-Ala-, Cys, Gly, Pro, Ser, Thr, or Val). Requires deformylation of the N(alpha)-formylated initiator methionine before it can be hydrolyzed. The polypeptide is Methionine aminopeptidase 1 (Mycobacterium tuberculosis (strain CDC 1551 / Oshkosh)).